Here is a 504-residue protein sequence, read N- to C-terminus: 26S proteasome non-ATPase regulatory subunit 5 (504 aa).

Residue alanine 2 is modified to N-acetylalanine.

It belongs to the proteasome subunit S5B/HSM3 family. In terms of assembly, interacts with PSMC1, PSMC2, PSMD1 and PSMD6. Part of transient complex containing PSMD5, PSMC2, PSMC1 and PSMD2 formed during the assembly of the 26S proteasome.

Its function is as follows. Acts as a chaperone during the assembly of the 26S proteasome, specifically of the base subcomplex of the PA700/19S regulatory complex (RC). In the initial step of the base subcomplex assembly is part of an intermediate PSMD5:PSMC2:PSMC1:PSMD2 module which probably assembles with a PSMD10:PSMC4:PSMC5:PAAF1 module followed by dissociation of PSMD5. This chain is 26S proteasome non-ATPase regulatory subunit 5 (PSMD5), found in Homo sapiens (Human).